The primary structure comprises 164 residues: UPF0114 protein YqhA (164 aa).

3 consecutive transmembrane segments (helical) span residues 15-35 (LLAPVYFGLSLALVALALKFF), 53-73 (LILVLLSLVDMTLVGGLLVMV), and 136-156 (LMWYVIIHLTFVLSAFVMGYL).

The protein belongs to the UPF0114 family.

It is found in the cell membrane. This Shigella dysenteriae serotype 1 (strain Sd197) protein is UPF0114 protein YqhA.